A 571-amino-acid chain; its full sequence is Proline--tRNA ligase (571 aa).

Belongs to the class-II aminoacyl-tRNA synthetase family. ProS type 1 subfamily. In terms of assembly, homodimer.

It localises to the cytoplasm. It carries out the reaction tRNA(Pro) + L-proline + ATP = L-prolyl-tRNA(Pro) + AMP + diphosphate. Its function is as follows. Catalyzes the attachment of proline to tRNA(Pro) in a two-step reaction: proline is first activated by ATP to form Pro-AMP and then transferred to the acceptor end of tRNA(Pro). As ProRS can inadvertently accommodate and process non-cognate amino acids such as alanine and cysteine, to avoid such errors it has two additional distinct editing activities against alanine. One activity is designated as 'pretransfer' editing and involves the tRNA(Pro)-independent hydrolysis of activated Ala-AMP. The other activity is designated 'posttransfer' editing and involves deacylation of mischarged Ala-tRNA(Pro). The misacylated Cys-tRNA(Pro) is not edited by ProRS. The chain is Proline--tRNA ligase from Ectopseudomonas mendocina (strain ymp) (Pseudomonas mendocina).